A 701-amino-acid polypeptide reads, in one-letter code: 2-isopropylmalate synthase (701 aa).

A disordered region spans residues 1–40; that stretch reads MTTSESPDAYTESFGAHTIVKPAGPPRVGQPSWNPQRASS. Positions 31 to 40 are enriched in polar residues; sequence PSWNPQRASS. The 275-residue stretch at 72–346 folds into the Pyruvate carboxyltransferase domain; that stretch reads PLWCAVDLRD…DPQIDFSNID (275 aa). Positions 81, 285, 287, and 321 each coordinate Mg(2+). The tract at residues 491–701 is regulatory domain; it reads PVRPLERIRQ…VVSAVNRAAR (211 aa). The stretch at 575–593 is one VNTR1 repeat; sequence VTIASPAQPGEAGRHASDP. Residues 581–670 form a disordered region; it reads AQPGEAGRHA…EAGRHASDPV (90 aa). A VNTR2 repeat occupies 594–612; the sequence is VTIASPAQPGEAGRHASDP. A VNTR3 repeat occupies 613 to 631; the sequence is VTIASPAQPGEAGRHASDP. Residues 632-650 form a VNTR4 repeat; sequence VTIASPAQPGEAGRHASDP. The VNTR5 repeat unit spans residues 651 to 669; that stretch reads VTIASPAQPGEAGRHASDP.

The protein belongs to the alpha-IPM synthase/homocitrate synthase family. LeuA type 2 subfamily. In terms of assembly, homodimer. It depends on Mg(2+) as a cofactor.

The protein localises to the cytoplasm. It carries out the reaction 3-methyl-2-oxobutanoate + acetyl-CoA + H2O = (2S)-2-isopropylmalate + CoA + H(+). Its pathway is amino-acid biosynthesis; L-leucine biosynthesis; L-leucine from 3-methyl-2-oxobutanoate: step 1/4. In terms of biological role, catalyzes the condensation of the acetyl group of acetyl-CoA with 3-methyl-2-oxobutanoate (2-ketoisovalerate) to form 3-carboxy-3-hydroxy-4-methylpentanoate (2-isopropylmalate). This is 2-isopropylmalate synthase from Mycobacterium bovis (strain ATCC BAA-935 / AF2122/97).